Consider the following 259-residue polypeptide: L-arginine-binding protein (259 aa).

The first 21 residues, 1–21, serve as a signal peptide directing secretion; it reads MKKLALLGALALSVLSLPTFA.

Belongs to the bacterial solute-binding protein 3 family.

The protein resides in the periplasm. Its function is as follows. Binds L-arginine with high affinity. Shows no measurable affinity for L-ornithine. This chain is L-arginine-binding protein, found in Pseudomonas aeruginosa (strain ATCC 15692 / DSM 22644 / CIP 104116 / JCM 14847 / LMG 12228 / 1C / PRS 101 / PAO1).